The chain runs to 141 residues: Hemoglobin subunit alpha-A (141 aa).

One can recognise a Globin domain in the interval 1–141 (VLTEEDKSRV…VAKTLVSRYR (141 aa)). O2 is bound at residue H58. H87 contacts heme b.

Belongs to the globin family. As to quaternary structure, heterotetramer of two alpha chains and two beta chains. As to expression, red blood cells.

Functionally, involved in oxygen transport from the lung to the various peripheral tissues. In Drymarchon melanurus erebennus (Texas indigo snake), this protein is Hemoglobin subunit alpha-A.